Consider the following 394-residue polypeptide: 1-deoxy-D-xylulose 5-phosphate reductoisomerase (394 aa).

Residues Thr14, Gly15, Ser16, Ile17, Gly40, and Asn128 each coordinate NADPH. Position 129 (Lys129) interacts with 1-deoxy-D-xylulose 5-phosphate. Glu130 is an NADPH binding site. Residue Asp154 participates in Mn(2+) binding. 1-deoxy-D-xylulose 5-phosphate contacts are provided by Ser155, Glu156, Ser180, and His203. Glu156 provides a ligand contact to Mn(2+). An NADPH-binding site is contributed by Gly209. Residues Ser216, Asn221, Lys222, and Glu225 each contribute to the 1-deoxy-D-xylulose 5-phosphate site. Mn(2+) is bound at residue Glu225.

Belongs to the DXR family. Mg(2+) is required as a cofactor. Requires Mn(2+) as cofactor.

It carries out the reaction 2-C-methyl-D-erythritol 4-phosphate + NADP(+) = 1-deoxy-D-xylulose 5-phosphate + NADPH + H(+). It participates in isoprenoid biosynthesis; isopentenyl diphosphate biosynthesis via DXP pathway; isopentenyl diphosphate from 1-deoxy-D-xylulose 5-phosphate: step 1/6. Catalyzes the NADPH-dependent rearrangement and reduction of 1-deoxy-D-xylulose-5-phosphate (DXP) to 2-C-methyl-D-erythritol 4-phosphate (MEP). The polypeptide is 1-deoxy-D-xylulose 5-phosphate reductoisomerase (Xylella fastidiosa (strain M23)).